Consider the following 230-residue polypeptide: Demethylmenaquinone methyltransferase (230 aa).

Residues Thr62, Asp80, 100-101 (DG), and Ser117 contribute to the S-adenosyl-L-methionine site.

Belongs to the class I-like SAM-binding methyltransferase superfamily. MenG/UbiE family.

The enzyme catalyses a 2-demethylmenaquinol + S-adenosyl-L-methionine = a menaquinol + S-adenosyl-L-homocysteine + H(+). Its pathway is quinol/quinone metabolism; menaquinone biosynthesis; menaquinol from 1,4-dihydroxy-2-naphthoate: step 2/2. Its function is as follows. Methyltransferase required for the conversion of demethylmenaquinol (DMKH2) to menaquinol (MKH2). The sequence is that of Demethylmenaquinone methyltransferase from Corynebacterium urealyticum (strain ATCC 43042 / DSM 7109).